Consider the following 82-residue polypeptide: Kappa-actitoxin-Avd4j (82 aa).

The N-terminal stretch at 1 to 19 (MNKALFLCLVVLCAAVVFA) is a signal peptide. Residues 20–31 (AEDLQKAKHAPF) constitute a propeptide that is removed on maturation. Intrachain disulfides connect C38-C73, C40-C66, and C56-C74.

The protein belongs to the sea anemone type 3 (BDS) potassium channel toxin family. As to expression, weakly expressed in the ectodermal tissue from the distal and proximal tentacles, body wall, and oral disk.

It localises to the secreted. The protein resides in the nematocyst. Its function is as follows. Blocks Kv3 voltage-gated potassium channels. Reduces blood pressure. The polypeptide is Kappa-actitoxin-Avd4j (Anemonia viridis (Snakelocks anemone)).